The primary structure comprises 459 residues: uncharacterized protein (459 aa).

The TRAM domain occupies 7-65 (PVNKNEIYTLTFEDLTHEGNGVAKIEGYPLFVPEVLPDEQAKVKVVKVNKNFGFGKLLE). Residues C78, C82, C85, and C164 each coordinate [4Fe-4S] cluster. S-adenosyl-L-methionine contacts are provided by Q288, Y317, E338, and D386. The active-site Nucleophile is the C413.

It belongs to the class I-like SAM-binding methyltransferase superfamily. RNA M5U methyltransferase family.

This is an uncharacterized protein from Oceanobacillus iheyensis (strain DSM 14371 / CIP 107618 / JCM 11309 / KCTC 3954 / HTE831).